The primary structure comprises 158 residues: Transcription elongation factor GreA (158 aa).

The stretch at 1–26 forms a coiled coil; sequence MNKVPLTEKGAQQLREELQELKTVVR.

The protein belongs to the GreA/GreB family.

Necessary for efficient RNA polymerase transcription elongation past template-encoded arresting sites. The arresting sites in DNA have the property of trapping a certain fraction of elongating RNA polymerases that pass through, resulting in locked ternary complexes. Cleavage of the nascent transcript by cleavage factors such as GreA or GreB allows the resumption of elongation from the new 3'terminus. GreA releases sequences of 2 to 3 nucleotides. The protein is Transcription elongation factor GreA of Nitrosococcus oceani (strain ATCC 19707 / BCRC 17464 / JCM 30415 / NCIMB 11848 / C-107).